The chain runs to 608 residues: Dolichyl-diphosphooligosaccharide--protein glycosyltransferase subunit 1 (608 aa).

Residues 1–25 form the signal peptide; it reads MESPVALLLLLLLCLGALAPTPGSA. The Lumenal segment spans residues 26 to 440; that stretch reads SSEAPPLVNE…FNKVLMLQEP (415 aa). At Lys188 the chain carries N6-acetyllysine. A glycan (N-linked (GlcNAc...) asparagine) is linked at Asn300. The helical transmembrane segment at 441–458 threads the bilayer; that stretch reads LLVVAAFYILFFTVIIYV. The Cytoplasmic segment spans residues 459-608; it reads RLDFSITKDP…TKIDHILDAL (150 aa). Position 539 is an N6-acetyllysine; alternate (Lys539). Lys539 participates in a covalent cross-link: Glycyl lysine isopeptide (Lys-Gly) (interchain with G-Cter in SUMO2); alternate.

It belongs to the OST1 family. As to quaternary structure, component of the oligosaccharyltransferase (OST) complex. OST exists in two different complex forms which contain common core subunits RPN1, RPN2, OST48, OST4, DAD1 and TMEM258, either STT3A or STT3B as catalytic subunits, and form-specific accessory subunits. STT3A complex assembly occurs through the formation of 3 subcomplexes. Subcomplex 1 contains RPN1 and TMEM258, subcomplex 2 contains the STT3A-specific subunits STT3A, DC2/OSTC, and KCP2 as well as the core subunit OST4, and subcomplex 3 contains RPN2, DAD1, and OST48. The STT3A complex can form stable complexes with the Sec61 complex or with both the Sec61 and TRAP complexes. Interacts with TMEM35A/NACHO. In terms of processing, ubiquitinated by the ECS(ASB11) complex. Ubiquitinated by RNF128, leading to degradation in a proteasome/lysosome-dependent manner. Post-translationally, ufmylated by UFL1 in response to endoplasmic reticulum stress, promoting reticulophagy of endoplasmic reticulum sheets.

The protein resides in the endoplasmic reticulum membrane. The protein operates within protein modification; protein glycosylation. Functionally, subunit of the oligosaccharyl transferase (OST) complex that catalyzes the initial transfer of a defined glycan (Glc(3)Man(9)GlcNAc(2) in eukaryotes) from the lipid carrier dolichol-pyrophosphate to an asparagine residue within an Asn-X-Ser/Thr consensus motif in nascent polypeptide chains, the first step in protein N-glycosylation. N-glycosylation occurs cotranslationally and the complex associates with the Sec61 complex at the channel-forming translocon complex that mediates protein translocation across the endoplasmic reticulum (ER). All subunits are required for a maximal enzyme activity. This is Dolichyl-diphosphooligosaccharide--protein glycosyltransferase subunit 1 from Mus musculus (Mouse).